The sequence spans 203 residues: Molybdenum cofactor guanylyltransferase (203 aa).

GTP contacts are provided by residues 12–14, K25, N53, D71, and D101; that span reads LAG. Position 101 (D101) interacts with Mg(2+).

The protein belongs to the MobA family. In terms of assembly, monomer. Requires Mg(2+) as cofactor.

It is found in the cytoplasm. It carries out the reaction Mo-molybdopterin + GTP + H(+) = Mo-molybdopterin guanine dinucleotide + diphosphate. Transfers a GMP moiety from GTP to Mo-molybdopterin (Mo-MPT) cofactor (Moco or molybdenum cofactor) to form Mo-molybdopterin guanine dinucleotide (Mo-MGD) cofactor. This chain is Molybdenum cofactor guanylyltransferase, found in Cupriavidus metallidurans (strain ATCC 43123 / DSM 2839 / NBRC 102507 / CH34) (Ralstonia metallidurans).